The sequence spans 644 residues: Sentrin-specific protease 1 (644 aa).

The segment at 1-200 (MDDIADRMRM…REIYRQLLQM (200 aa)) is interaction with CCAR2. Residues serine 57, serine 117, serine 132, and serine 157 each carry the phosphoserine modification. A disordered region spans residues 92-117 (QSANGQWRNSTPSSSSSLQKSRNSRS). The segment covering 99-117 (RNSTPSSSSSLQKSRNSRS) has biased composition (low complexity). 2 disordered regions span residues 156 to 184 (PSPS…TAEE) and 283 to 312 (SKDS…NTQS). A Nuclear localization signal motif is present at residues 171 to 177 (PKKTQRR). Residues 450–613 (LTITRKDIQT…GMFACKYADC (164 aa)) are protease. Active-site residues include histidine 533 and aspartate 550. The Nuclear localization signal signature appears at 574–577 (KKRK). The Nucleophile role is filled by cysteine 603. Residues 628–634 (PYFRKRM) carry the Nuclear localization signal motif. The Nuclear export signal signature appears at 635-644 (VWEILHRKLL).

Belongs to the peptidase C48 family. As to quaternary structure, interacts with RBM33; promoting ALKBH5 desumoylation and subsequent activation. Highly expressed in testis. Expressed at lower levels in thymus, pancreas, spleen, liver, ovary and small intestine.

The protein localises to the nucleus. Its subcellular location is the cytoplasm. Functionally, protease that catalyzes two essential functions in the SUMO pathway. The first is the hydrolysis of an alpha-linked peptide bond at the C-terminal end of the small ubiquitin-like modifier (SUMO) propeptides, SUMO1, SUMO2 and SUMO3 leading to the mature form of the proteins. The second is the deconjugation of SUMO1, SUMO2 and SUMO3 from targeted proteins, by cleaving an epsilon-linked peptide bond between the C-terminal glycine of the mature SUMO and the lysine epsilon-amino group of the target protein. Deconjugates SUMO1 from HIPK2. Deconjugates SUMO1 from HDAC1 and BHLHE40/DEC1, which decreases its transcriptional repression activity. Deconjugates SUMO1 from CLOCK, which decreases its transcriptional activation activity. Deconjugates SUMO2 from MTA1. Inhibits N(6)-methyladenosine (m6A) RNA methylation by mediating SUMO1 deconjugation from METTL3 and ALKBH5: METTL3 inhibits the m6A RNA methyltransferase activity, while ALKBH5 desumoylation promotes m6A demethylation. Desumoylates CCAR2 which decreases its interaction with SIRT1. Deconjugates SUMO1 from GPS2. The sequence is that of Sentrin-specific protease 1 (SENP1) from Homo sapiens (Human).